A 492-amino-acid polypeptide reads, in one-letter code: Metal cation symporter ZIP14 (492 aa).

Residues 1 to 30 (MKLLLLHPAFQSCLLLTLLGLWRTTPEAHA) form the signal peptide. Residues 31-157 (SSLGAPAISA…PSAVEVWGYG (127 aa)) lie on the Extracellular side of the membrane. Residues N77, N87, and N102 are each glycosylated (N-linked (GlcNAc...) asparagine). Residues 158–178 (LLCVTVISLCSLLGASVVPFM) traverse the membrane as a helical segment. The Cytoplasmic segment spans residues 179–186 (KKTFYKRL). Residues 187–207 (LLYFIALAIGTLYSNALFQLI) form a helical membrane-spanning segment. Residues 208 to 224 (PEAFGFNPLEDYYVSKS) are Extracellular-facing. Residues 225–245 (AVVFGGFYLFFFTEKILKILL) form a helical membrane-spanning segment. The Cytoplasmic segment spans residues 246 to 397 (KQKNEHHHGH…LLNAGMSIQQ (152 aa)). An HHHGHXHX-motif motif is present at residues 251–258 (HHHGHSHY). Positions 376-381 (EEFPHE) match the XEXPHE-motif motif. The helical transmembrane segment at 398–418 (ALFFNFLSACCCYLGLAFGIL) threads the bilayer. Topologically, residues 419-424 (AGSHFS) are extracellular. The chain crosses the membrane as a helical span at residues 425–445 (ANWIFALAGGMFLYISLADMF). Over 446 to 460 (PEMNEVCQEDERKGS) the chain is Cytoplasmic. Residues 461-481 (ILIPFIIQNLGLLTGFTIMVV) traverse the membrane as a helical segment. The Extracellular segment spans residues 482–492 (LTMYSGQIQIG).

It belongs to the ZIP transporter (TC 2.A.5) family. As to quaternary structure, homotrimer. Ubiquitinated. Ubiquitination occurs upon iron depletion. The ubiquitinated form undergoes proteasomal degradation. In terms of processing, N-glycosylated. N-glycosylation at Asn-102 is required for iron-regulated extraction of the transporter from membranes and subsequent proteasomal degradation. As to expression, ubiquitously expressed, with higher expression in liver, pancreas, fetal liver, thyroid gland, left and right ventricle, right atrium and fetal heart. Weakly expressed in spleen, thymus, and peripheral blood leukocytes. Expressed in liver and in brain by large neurons in the globus pallidus, the insular cortex and the dentate nucleus and to a lower extent in the putamen and the caudate nucleus (at protein level). Expressed in osteoblasts and giant osteoclast-like cells, but not in osteocytes found osteoblastoma and giant cell tumors (at protein level). Expressed by microvascular capillary endothelial cells that constitute the blood-brain barrier (at protein level). Expressed by macrophages. In terms of tissue distribution, widely expressed but not detected in brain, heart, skeletal muscle, placenta and fetal skin.

The protein resides in the cell membrane. It localises to the apical cell membrane. The protein localises to the basolateral cell membrane. It is found in the early endosome membrane. Its subcellular location is the late endosome membrane. The protein resides in the lysosome membrane. It catalyses the reaction Zn(2+)(out) + 2 hydrogencarbonate(out) = Zn(2+)(in) + 2 hydrogencarbonate(in). It carries out the reaction Mn(2+)(out) + 2 hydrogencarbonate(out) = Mn(2+)(in) + 2 hydrogencarbonate(in). The enzyme catalyses Fe(2+)(out) + 2 hydrogencarbonate(out) = Fe(2+)(in) + 2 hydrogencarbonate(in). The catalysed reaction is Cd(2+)(out) + 2 hydrogencarbonate(out) = Cd(2+)(in) + 2 hydrogencarbonate(in). In terms of biological role, electroneutral transporter of the plasma membrane mediating the cellular uptake of the divalent metal cations zinc, manganese and iron that are important for tissue homeostasis, metabolism, development and immunity. Functions as an energy-dependent symporter, transporting through the membranes an electroneutral complex composed of a divalent metal cation and two bicarbonate anions. Beside these endogenous cellular substrates, can also import cadmium a non-essential metal which is cytotoxic and carcinogenic. Controls the cellular uptake by the intestinal epithelium of systemic zinc, which is in turn required to maintain tight junctions and the intestinal permeability. Modifies the activity of zinc-dependent phosphodiesterases, thereby indirectly regulating G protein-coupled receptor signaling pathways important for gluconeogenesis and chondrocyte differentiation. Regulates insulin receptor signaling, glucose uptake, glycogen synthesis and gluconeogenesis in hepatocytes through the zinc-dependent intracellular catabolism of insulin. Through zinc cellular uptake also plays a role in the adaptation of cells to endoplasmic reticulum stress. Major manganese transporter of the basolateral membrane of intestinal epithelial cells, it plays a central role in manganese systemic homeostasis through intestinal manganese uptake. Also involved in manganese extracellular uptake by cells of the blood-brain barrier. May also play a role in manganese and zinc homeostasis participating in their elimination from the blood through the hepatobiliary excretion. Also functions in the extracellular uptake of free iron. May also function intracellularly and mediate the transport from endosomes to cytosol of iron endocytosed by transferrin. Plays a role in innate immunity by regulating the expression of cytokines by activated macrophages. This is Metal cation symporter ZIP14 from Homo sapiens (Human).